The chain runs to 962 residues: pH-response regulator protein palF/prr-3 (962 aa).

4 disordered regions span residues 1–43, 225–326, 568–675, and 689–962; these read MGPF…DSST, APPK…THPS, TDSN…PDEN, and RLLP…RYER. A compositionally biased stretch (basic residues) spans 237-246; it reads ISKRAKKKRP. 3 stretches are compositionally biased toward polar residues: residues 297 to 307, 314 to 326, and 581 to 596; these read GFSQAPRSVSH, SGDS…THPS, and PSLT…SNYV. Low complexity-rich tracts occupy residues 696 to 722 and 738 to 747; these read PIAA…PDSS and PTPAATPATA. Basic and acidic residues predominate over residues 793–805; sequence TEDKQELERRRLL. Low complexity predominate over residues 830–839; it reads AGPSGSRAGP. Residues 840 to 849 are compositionally biased toward pro residues; that stretch reads SAPPPAPPVA. The segment covering 913–928 has biased composition (low complexity); the sequence is PSSPVLAPASAFFPAS. A compositionally biased stretch (polar residues) spans 929-949; the sequence is GSGNVHDSPREQGQQARSDSS.

It belongs to the arrestin family. PalF/RIM8 subfamily.

Required for the proteolytic cleavage of the transcription factor pacc-1 in response to alkaline ambient pH. The sequence is that of pH-response regulator protein palF/prr-3 (prr-3) from Neurospora crassa (strain ATCC 24698 / 74-OR23-1A / CBS 708.71 / DSM 1257 / FGSC 987).